Consider the following 301-residue polypeptide: Nucleosome assembly protein 1;3 (301 aa).

Residues 15 to 69 (VETLKNKLQALAEQHVDVLESLAPVVRKRVDVLIEIQSQHDELEAKFLEEKAALE) are a coiled coil. The short motif at 36–51 (LAPVVRKRVDVLIEIQ) is the Nuclear export signal element. Residues 278-301 (DEDYGASWVDDEEDDDDEYSDEEA) form a disordered region.

This sequence belongs to the nucleosome assembly protein (NAP) family.

Its subcellular location is the nucleus. It localises to the cytoplasm. Its function is as follows. May modulate chromatin structure by regulation of nucleosome assembly/disassembly. The protein is Nucleosome assembly protein 1;3 (NAP1;3) of Oryza sativa subsp. japonica (Rice).